A 935-amino-acid chain; its full sequence is Isoleucine--tRNA ligase (935 aa).

Residues 58–68 (PYANGSIHVGH) carry the 'HIGH' region motif. Glu558 is a binding site for L-isoleucyl-5'-AMP. The short motif at 599-603 (KMSKS) is the 'KMSKS' region element. Lys602 is an ATP binding site. 4 residues coordinate Zn(2+): Cys897, Cys900, Cys917, and Cys920.

Belongs to the class-I aminoacyl-tRNA synthetase family. IleS type 1 subfamily. In terms of assembly, monomer. Zn(2+) serves as cofactor.

It is found in the cytoplasm. The enzyme catalyses tRNA(Ile) + L-isoleucine + ATP = L-isoleucyl-tRNA(Ile) + AMP + diphosphate. Catalyzes the attachment of isoleucine to tRNA(Ile). As IleRS can inadvertently accommodate and process structurally similar amino acids such as valine, to avoid such errors it has two additional distinct tRNA(Ile)-dependent editing activities. One activity is designated as 'pretransfer' editing and involves the hydrolysis of activated Val-AMP. The other activity is designated 'posttransfer' editing and involves deacylation of mischarged Val-tRNA(Ile). This chain is Isoleucine--tRNA ligase, found in Francisella tularensis subsp. novicida (strain U112).